The following is a 114-amino-acid chain: Probable non-functional T cell receptor beta variable 5-3 (114 aa).

A signal peptide spans 1–21 (MGPGLLCWELLYLLGAGPVEA). An Ig-like domain is found at 22-114 (GVTQSPTHLI…SALYLCARSL (93 aa)). A disulfide bridge links cysteine 42 with cysteine 110. An N-linked (GlcNAc...) asparagine glycan is attached at asparagine 96.

In terms of assembly, alpha-beta TR is a heterodimer composed of an alpha and beta chain; disulfide-linked. The alpha-beta TR is associated with the transmembrane signaling CD3 coreceptor proteins to form the TR-CD3 (TcR or TCR). The assembly of alpha-beta TR heterodimers with CD3 occurs in the endoplasmic reticulum where a single alpha-beta TR heterodimer associates with one CD3D-CD3E heterodimer, one CD3G-CD3E heterodimer and one CD247 homodimer forming a stable octameric structure. CD3D-CD3E and CD3G-CD3E heterodimers preferentially associate with TR alpha and TR beta chains, respectively. The association of the CD247 homodimer is the last step of TcR assembly in the endoplasmic reticulum and is required for transport to the cell surface.

It is found in the cell membrane. Probable non-functional open reading frame (ORF) of V region of the variable domain of T cell receptor (TR) beta chain. Non-functional ORF generally cannot participate in the synthesis of a productive T cell receptor (TR) chain due to altered V-(D)-J or switch recombination and/or splicing site (at mRNA level) and/or conserved amino acid change (protein level). Alpha-beta T cell receptors are antigen specific receptors which are essential to the immune response and are present on the cell surface of T lymphocytes. Recognize peptide-major histocompatibility (MH) (pMH) complexes that are displayed by antigen presenting cells (APC), a prerequisite for efficient T cell adaptive immunity against pathogens. Binding of alpha-beta TR to pMH complex initiates TR-CD3 clustering on the cell surface and intracellular activation of LCK that phosphorylates the ITAM motifs of CD3G, CD3D, CD3E and CD247 enabling the recruitment of ZAP70. In turn ZAP70 phosphorylates LAT, which recruits numerous signaling molecules to form the LAT signalosome. The LAT signalosome propagates signal branching to three major signaling pathways, the calcium, the mitogen-activated protein kinase (MAPK) kinase and the nuclear factor NF-kappa-B (NF-kB) pathways, leading to the mobilization of transcription factors that are critical for gene expression and essential for T cell growth and differentiation. The T cell repertoire is generated in the thymus, by V-(D)-J rearrangement. This repertoire is then shaped by intrathymic selection events to generate a peripheral T cell pool of self-MH restricted, non-autoaggressive T cells. Post-thymic interaction of alpha-beta TR with the pMH complexes shapes TR structural and functional avidity. This chain is Probable non-functional T cell receptor beta variable 5-3, found in Homo sapiens (Human).